The sequence spans 1141 residues: Serine-aspartate repeat-containing protein E (1141 aa).

The N-terminal stretch at 1-52 is a signal peptide; sequence MINRDNKKAITKKGMISNRLNKFSIRKYTVGTASILVGTTLIFGLGNQEAKA. The YSIRK-G/S signaling motif signature appears at 23-34; the sequence is FSIRKYTVGTAS. A ligand binding A region region spans residues 53–601; that stretch reads AENTSTENAK…GDGTVKPEEK (549 aa). The tract at residues 54 to 248 is disordered; it reads ENTSTENAKQ…RSTKPVATAP (195 aa). Residues 61–75 show a composition bias toward basic and acidic residues; that stretch reads AKQDDATTSDNKEVV. Over residues 77–90 the composition is skewed to low complexity; sequence ETENNSTTENDSTN. A compositionally biased stretch (basic and acidic residues) spans 92 to 108; it reads IKKETNTDSQPEAKEES. Low complexity predominate over residues 109–126; sequence TTSSTQQQQNNVTATTET. Over residues 130-145 the composition is skewed to basic and acidic residues; that stretch reads NIEKENVKPSTDKTAT. Residues 159–207 show a composition bias toward polar residues; sequence NYTNNDVTTKPSTSEIQTKPTTPQESTNIENSQPQPTPSKVDNQVTDAT. Basic and acidic residues predominate over residues 216–241; that stretch reads SKEELKNNPEKLKELVRNDNNTDRST. 3 CNA-B domains span residues 602 to 714, 715 to 824, and 825 to 935; these read LYKI…YKEP, KYNL…YKTP, and KYSL…EEDT. The interval 899-1117 is disordered; sequence VTNTTEDDKD…GSENNGSNNA (219 aa). Composition is skewed to acidic residues over residues 903–913 and 930–1080; these read TEDDKDADGGE and YFEE…DSDS. Residues 1104–1108 carry the LPXTG sorting signal motif; the sequence is LPETG. Thr-1107 carries the pentaglycyl murein peptidoglycan amidated threonine modification. Positions 1108 to 1141 are cleaved as a propeptide — removed by sortase; that stretch reads GSENNGSNNATLFGGLFAALGSLLLFGRRKKQNK.

This sequence belongs to the serine-aspartate repeat-containing protein (SDr) family. Interacts with host complement factor H/CFAH (via C-terminus). Interacts with host complement regulator C4BPA.

Its subcellular location is the secreted. It localises to the cell wall. In terms of biological role, cell surface-associated calcium-binding protein which plays an important role in adhesion and pathogenesis. Contributes to the resistance to killing by innate immune components in blood and thus attenuates bacterial clearance by interacting with host complement factor H/CFAH and modulating its activity. Also inhibits bacterial opsonization and killing by interacting with host complement regulator C4BPA and thus inhibiting classical complement pathway activation. The sequence is that of Serine-aspartate repeat-containing protein E (sdrE) from Staphylococcus aureus (strain N315).